Consider the following 197-residue polypeptide: Peptidyl-tRNA hydrolase (197 aa).

Position 18 (tyrosine 18) interacts with tRNA. Histidine 23 serves as the catalytic Proton acceptor. The tRNA site is built by tyrosine 68, asparagine 70, and asparagine 116.

Belongs to the PTH family. Monomer.

Its subcellular location is the cytoplasm. It carries out the reaction an N-acyl-L-alpha-aminoacyl-tRNA + H2O = an N-acyl-L-amino acid + a tRNA + H(+). Functionally, hydrolyzes ribosome-free peptidyl-tRNAs (with 1 or more amino acids incorporated), which drop off the ribosome during protein synthesis, or as a result of ribosome stalling. Catalyzes the release of premature peptidyl moieties from peptidyl-tRNA molecules trapped in stalled 50S ribosomal subunits, and thus maintains levels of free tRNAs and 50S ribosomes. The polypeptide is Peptidyl-tRNA hydrolase (Desulfotalea psychrophila (strain LSv54 / DSM 12343)).